The following is a 589-amino-acid chain: Phenylalanine--tRNA ligase beta subunit (589 aa).

In terms of domain architecture, B5 spans 302 to 377; it reads LEVREERISV…IAYGYNNIKK (76 aa). Mg(2+)-binding residues include aspartate 355, aspartate 361, glutamate 364, and aspartate 365.

Belongs to the phenylalanyl-tRNA synthetase beta subunit family. Type 2 subfamily. In terms of assembly, tetramer of two alpha and two beta subunits. Mg(2+) serves as cofactor.

The protein resides in the cytoplasm. It catalyses the reaction tRNA(Phe) + L-phenylalanine + ATP = L-phenylalanyl-tRNA(Phe) + AMP + diphosphate + H(+). The protein is Phenylalanine--tRNA ligase beta subunit of Drosophila melanogaster (Fruit fly).